Reading from the N-terminus, the 300-residue chain is Ribosomal protein bS6--L-glutamate ligase (300 aa).

One can recognise an ATP-grasp domain in the interval 104–287; it reads LQLLARQGID…IAGRMIQWIE (184 aa). Residues Lys-141, 178 to 179, Asp-187, and 211 to 213 each bind ATP; these read EY and RSN. Residues Asp-248, Glu-260, and Asn-262 each coordinate Mg(2+). Mn(2+) is bound by residues Asp-248, Glu-260, and Asn-262.

It belongs to the RimK family. Requires Mg(2+) as cofactor. Mn(2+) is required as a cofactor.

Functionally, an L-glutamate ligase that catalyzes the ATP-dependent post-translational addition of glutamate residues to the C-terminus of ribosomal protein bS6 (RpsF). Is also able to catalyze the synthesis of poly-alpha-glutamate in vitro, via ATP hydrolysis from unprotected glutamate as substrate. The number of glutamate residues added to either RpsF or to poly-alpha-glutamate changes with pH. The polypeptide is Ribosomal protein bS6--L-glutamate ligase (Salmonella schwarzengrund (strain CVM19633)).